We begin with the raw amino-acid sequence, 117 residues long: Histone H1-like protein HC1 (117 aa).

The segment at 57 to 117 (EKSGLMTRKP…KSSKSRYLRK (61 aa)) is disordered. Basic residues predominate over residues 66 to 81 (PATKAKKAAATKKAAP). Positions 82 to 94 (KPKIQAKAAPKAK) are enriched in low complexity. A compositionally biased stretch (basic residues) spans 95–117 (ATTKKTPAKAKAKKSSKSRYLRK).

It belongs to the histone H1/H5 family. HCT subfamily.

Its function is as follows. Might have a role analogous to that of eukaryotic histone proteins. This is Histone H1-like protein HC1 (hctA) from Chlamydia psittaci (Chlamydophila psittaci).